The following is a 508-amino-acid chain: DEAD-box ATP-dependent RNA helicase 8 (508 aa).

The segment at 1 to 123 is disordered; sequence MDPRARYPPG…LKLPPQDTRY (123 aa). Residues 18 to 53 are compositionally biased toward low complexity; sequence NPNYYNRGPPLQQQHNHHQQQQTSAPHHQQYVQRQP. Positions 54 to 64 are enriched in basic residues; that stretch reads QQHHHHNHHQQ. Positions 134–162 match the Q motif motif; sequence NEFEDYFLKRELLMGIYEKGFERPSPIQE. Positions 165–335 constitute a Helicase ATP-binding domain; the sequence is IPIALTGSDI…DKYLPKPYVI (171 aa). 178 to 185 contributes to the ATP binding site; sequence AKNGTGKT. A DEAD box motif is present at residues 283–286; that stretch reads DEAD. The Helicase C-terminal domain maps to 345 to 505; sequence GITQFYAFVE…PIPPQIDQAI (161 aa).

This sequence belongs to the DEAD box helicase family. DDX6/DHH1 subfamily.

It is found in the cytoplasm. Its subcellular location is the P-body. It carries out the reaction ATP + H2O = ADP + phosphate + H(+). In terms of biological role, ATP-dependent RNA helicase involved in mRNA turnover, and more specifically in mRNA decapping. The protein is DEAD-box ATP-dependent RNA helicase 8 of Oryza sativa subsp. japonica (Rice).